The chain runs to 526 residues: Exodeoxyribonuclease 7 large subunit (526 aa).

The tract at residues 496-526 (GAMTTEGGTPPAGAKKRSAKPADPTKQGSLF) is disordered.

Belongs to the XseA family. Heterooligomer composed of large and small subunits.

Its subcellular location is the cytoplasm. It carries out the reaction Exonucleolytic cleavage in either 5'- to 3'- or 3'- to 5'-direction to yield nucleoside 5'-phosphates.. Its function is as follows. Bidirectionally degrades single-stranded DNA into large acid-insoluble oligonucleotides, which are then degraded further into small acid-soluble oligonucleotides. This is Exodeoxyribonuclease 7 large subunit from Rhizobium etli (strain CIAT 652).